A 624-amino-acid polypeptide reads, in one-letter code: Low affinity potassium transport system protein Kup (624 aa).

Helical transmembrane passes span 9–29 (LPAI…TSPL), 49–69 (VFGF…IKYL), 103–123 (VIMG…TPAI), 137–157 (PQLD…LFMI), 165–185 (VGKL…GLGL), 213–233 (VSFI…ALYA), 247–267 (WFTV…ALLL), 276–296 (PFFL…AALA), 337–357 (IYIP…IVIV), 365–385 (LAAA…ILST), 398–418 (FVAL…TANL), and 421–441 (LLSG…VMTT).

This sequence belongs to the HAK/KUP transporter (TC 2.A.72) family.

The protein localises to the cell inner membrane. The enzyme catalyses K(+)(in) + H(+)(in) = K(+)(out) + H(+)(out). In terms of biological role, responsible for the low-affinity transport of potassium into the cell. Likely operates as a K(+):H(+) symporter. This chain is Low affinity potassium transport system protein Kup, found in Shigella dysenteriae serotype 1 (strain Sd197).